A 151-amino-acid chain; its full sequence is Deoxyuridine 5'-triphosphate nucleotidohydrolase (151 aa).

Substrate is bound by residues 70–72 (RSG), N83, 87–89 (LID), and M97.

This sequence belongs to the dUTPase family. The cofactor is Mg(2+).

The enzyme catalyses dUTP + H2O = dUMP + diphosphate + H(+). It functions in the pathway pyrimidine metabolism; dUMP biosynthesis; dUMP from dCTP (dUTP route): step 2/2. This enzyme is involved in nucleotide metabolism: it produces dUMP, the immediate precursor of thymidine nucleotides and it decreases the intracellular concentration of dUTP so that uracil cannot be incorporated into DNA. The sequence is that of Deoxyuridine 5'-triphosphate nucleotidohydrolase from Pseudomonas putida (strain ATCC 700007 / DSM 6899 / JCM 31910 / BCRC 17059 / LMG 24140 / F1).